A 645-amino-acid polypeptide reads, in one-letter code: Rab11 family-interacting protein 1 (645 aa).

The C2 domain maps to 1–128 (MSLAASAGRG…DQGRRKKQWY (128 aa)). Positions 171-187 (PFGKLKDKIKGKNKDSA) are enriched in basic and acidic residues. The tract at residues 171-215 (PFGKLKDKIKGKNKDSASDTASAIVPSVTPSVDSDDESFSKDKKK) is disordered. Phosphoserine occurs at positions 186, 204, 208, and 236. The interval 259-296 (WDDDAHEDESSSASDVMSHKRTSSTDQQPNQSNFSLPK) is disordered. Positions 282–293 (STDQQPNQSNFS) are enriched in polar residues. Residues S301, S316, S340, S342, S344, S346, S357, S358, and S383 each carry the phosphoserine modification. Residues 330–545 (PEARSEIRES…PRPHPVKPMN (216 aa)) form a disordered region. 2 stretches are compositionally biased toward basic and acidic residues: residues 378–391 (SDRR…KDSM) and 418–432 (AARE…ESKK). S434 is modified (phosphoserine). Positions 459–487 (SEKEKERKGALVEAQLREEDLMRRPEKDA) are enriched in basic and acidic residues. The FIP-RBD domain maps to 573 to 635 (KKYQPSDPAF…EETPNILRVP (63 aa)). The segment at 581–645 (AFAYAQLTHD…AQMGKKAGKM (65 aa)) is necessary for interaction with RAB4A and RAB11A, subcellular location and endosomal recycling.

Homooligomer. Interacts with RAB11A, RAB11B, RAB25, RAB4A and RAB14.

The protein resides in the recycling endosome. It is found in the cytoplasmic vesicle. A Rab11 effector protein involved in the endosomal recycling process. Also involved in controlling membrane trafficking along the phagocytic pathway and in phagocytosis. Interaction with RAB14 may function in the process of neurite formation. In Mus musculus (Mouse), this protein is Rab11 family-interacting protein 1 (Rab11fip1).